The primary structure comprises 531 residues: UDP-glucuronosyltransferase 1A7 (531 aa).

The N-terminal stretch at 1–25 (MAPADVPASLPLGLCLLLASGFGHA) is a signal peptide. 3 N-linked (GlcNAc...) asparagine glycosylation sites follow: N71, N293, and N431. Residues 487 to 503 (LDVIGFLLAIVLTVVFI) form a helical membrane-spanning segment.

This sequence belongs to the UDP-glycosyltransferase family. In terms of assembly, homodimer. Homooligomer. Interacts with UGT1A1, UGT1A3, UGT1A4, UGT1A6, UGT1A8, UGT1A9 and UGT1A10 to form heterodimers.

The protein localises to the endoplasmic reticulum membrane. It carries out the reaction glucuronate acceptor + UDP-alpha-D-glucuronate = acceptor beta-D-glucuronoside + UDP + H(+). The enzyme catalyses 17alpha-estradiol + UDP-alpha-D-glucuronate = 17alpha-estradiol 3-O-(beta-D-glucuronate) + UDP + H(+). It catalyses the reaction prunetin + UDP-alpha-D-glucuronate = prunetin-5-O-beta-D-glucuronide + UDP. The catalysed reaction is 5-epi-5-F2t-IsoP + UDP-alpha-D-glucuronate = 5-epi-5-F2t-IsoP-glucuronide + UDP + H(+). It carries out the reaction (E)-ferulate + UDP-alpha-D-glucuronate = (E)-ferulic acid beta-D-glucuronate ester + UDP. The enzyme catalyses candesartan + UDP-alpha-D-glucuronate = candesartan O-beta-D-glucuronoside + UDP. It catalyses the reaction SN-38 + UDP-alpha-D-glucuronate = SN-38 O-beta-D-glucuronide + UDP + H(+). The catalysed reaction is mycophenolate + UDP-alpha-D-glucuronate = mycophenolate 7-O-beta-D-glucuronide + UDP + H(+). UDP-glucuronosyltransferase (UGT) that catalyzes phase II biotransformation reactions in which lipophilic substrates are conjugated with glucuronic acid to increase the metabolite's water solubility, thereby facilitating excretion into either the urine or bile. Essential for the elimination and detoxification of drugs, xenobiotics and endogenous compounds. Catalyzes the glucuronidation of endogenous estrogen hormone epiestradiol. Involved in the glucuronidation of F2-isoprostane (5-epi-5-F2t-IsoP). Involved in the glucuronidation of the phytochemical ferulic acid at the carboxylic acid group. Also catalyzes the glucuronidation of the isoflavones genistein, daidzein, glycitein, formononetin, biochanin A and prunetin, which are phytoestrogens with anticancer and cardiovascular properties. Involved in the glucuronidation of the AGTR1 angiotensin receptor antagonist caderastan, a drug which can inhibit the effect of angiotensin II. Involved in the biotransformation of 7-ethyl-10-hydroxycamptothecin (SN-38), the pharmacologically active metabolite of the anticancer drug irinotecan. Also metabolizes mycophenolate, an immunosuppressive agent. In Rattus norvegicus (Rat), this protein is UDP-glucuronosyltransferase 1A7.